The sequence spans 388 residues: Tumor protein p53-inducible protein 13 (388 aa).

The first 27 residues, 1–27 (MVPPPPPPSRLLLVALVGLLSLHEVVA), serve as a signal peptide directing secretion. The Extracellular segment spans residues 28–304 (EPAEEAGTRC…ARGPTPRTEE (277 aa)). Residues 305–325 (AAWAAMALTFLLVLLTLATLC) form a helical membrane-spanning segment. The Cytoplasmic portion of the chain corresponds to 326–388 (TRLHRNFRRS…DSGPDSESSD (63 aa)). The span at 361–372 (PSRRIKRSRRRP) shows a compositional bias: basic residues. The segment at 361–388 (PSRRIKRSRRRPLLPPTPDSGPDSESSD) is disordered.

It localises to the cell membrane. The protein resides in the cytoplasm. Functionally, may act as a tumor suppressor. Inhibits tumor cell growth, when overexpressed. This is Tumor protein p53-inducible protein 13 (Tp53i13) from Rattus norvegicus (Rat).